Here is a 412-residue protein sequence, read N- to C-terminus: Proteasome-activating nucleotidase (412 aa).

The stretch at 15-73 (EDIYQYLLERITNLENRNLELREQFRQMESEKRYVETQKIRYERELRKLKSEIEQLRSP) forms a coiled coil. ATP-binding positions include 197–202 (GTGKTL) and His-336. The segment at 410 to 412 (MFA) is docks into pockets in the proteasome alpha-ring to cause gate opening.

It belongs to the AAA ATPase family. As to quaternary structure, homohexamer. The hexameric complex has a two-ring architecture resembling a top hat that caps the 20S proteasome core at one or both ends. Upon ATP-binding, the C-terminus of PAN interacts with the alpha-rings of the proteasome core by binding to the intersubunit pockets.

It is found in the cytoplasm. Its function is as follows. ATPase which is responsible for recognizing, binding, unfolding and translocation of substrate proteins into the archaeal 20S proteasome core particle. Is essential for opening the gate of the 20S proteasome via an interaction with its C-terminus, thereby allowing substrate entry and access to the site of proteolysis. Thus, the C-termini of the proteasomal ATPase function like a 'key in a lock' to induce gate opening and therefore regulate proteolysis. Unfolding activity requires energy from ATP hydrolysis, whereas ATP binding alone promotes ATPase-20S proteasome association which triggers gate opening, and supports translocation of unfolded substrates. The sequence is that of Proteasome-activating nucleotidase from Methanoculleus marisnigri (strain ATCC 35101 / DSM 1498 / JR1).